We begin with the raw amino-acid sequence, 345 residues long: Phosphoribosylformylglycinamidine cyclo-ligase (345 aa).

This sequence belongs to the AIR synthase family.

The protein localises to the cytoplasm. It carries out the reaction 2-formamido-N(1)-(5-O-phospho-beta-D-ribosyl)acetamidine + ATP = 5-amino-1-(5-phospho-beta-D-ribosyl)imidazole + ADP + phosphate + H(+). Its pathway is purine metabolism; IMP biosynthesis via de novo pathway; 5-amino-1-(5-phospho-D-ribosyl)imidazole from N(2)-formyl-N(1)-(5-phospho-D-ribosyl)glycinamide: step 2/2. This chain is Phosphoribosylformylglycinamidine cyclo-ligase, found in Salmonella typhimurium (strain LT2 / SGSC1412 / ATCC 700720).